Reading from the N-terminus, the 131-residue chain is SPbeta prophage-derived uncharacterized protein YomZ (131 aa).

The chain is SPbeta prophage-derived uncharacterized protein YomZ (yomZ) from Bacillus subtilis (strain 168).